The sequence spans 316 residues: Adenine deaminase (316 aa).

The Zn(2+) site is built by His-14, His-16, and His-194. Catalysis depends on Glu-197, which acts as the Proton donor. Position 275 (Asp-275) interacts with Zn(2+). Asp-276 lines the substrate pocket.

Belongs to the metallo-dependent hydrolases superfamily. Adenosine and AMP deaminases family. Adenine deaminase type 2 subfamily. Zn(2+) is required as a cofactor.

It carries out the reaction adenine + H2O + H(+) = hypoxanthine + NH4(+). In terms of biological role, catalyzes the hydrolytic deamination of adenine to hypoxanthine. Plays an important role in the purine salvage pathway and in nitrogen catabolism. The chain is Adenine deaminase from Pseudomonas aeruginosa (strain LESB58).